Here is an 80-residue protein sequence, read N- to C-terminus: Protein CEBPZOS (80 aa).

Residues 15–32 traverse the membrane as a helical segment; it reads GVLVAELVGVFGAYFLFS.

The protein resides in the mitochondrion membrane. The chain is Protein CEBPZOS from Homo sapiens (Human).